The primary structure comprises 955 residues: Thrombospondin-4 (955 aa).

A signal peptide spans 1-24 (MPRRKGLCLFLQMLLLHLYGVCQA). The 168-residue stretch at 25–192 (QPNYQVFDLL…MDELKLVMGG (168 aa)) folds into the Laminin G-like domain. The 40-residue stretch at 281 to 320 (PKPRCDATSCFRGVRCIDTEGGFQCGPCPEGYTGNGVICT) folds into the EGF-like 1 domain. Cystine bridges form between Cys-285–Cys-296, Cys-290–Cys-305, Cys-308–Cys-319, Cys-325–Cys-336, Cys-330–Cys-345, Cys-348–Cys-372, Cys-378–Cys-392, Cys-386–Cys-401, Cys-404–Cys-416, Cys-422–Cys-435, Cys-429–Cys-445, Cys-447–Cys-458, Cys-474–Cys-479, Cys-484–Cys-504, Cys-520–Cys-540, Cys-543–Cys-563, Cys-579–Cys-599, Cys-602–Cys-622, Cys-640–Cys-660, Cys-680–Cys-700, and Cys-716–Cys-937. The region spanning 321–358 (DVDECRLNPCFLGVRCINTSPGFKCESCPPGYTGSTIQ) is the EGF-like 2; calcium-binding domain. The EGF-like 3; calcium-binding domain maps to 374–415 (DTNECENGRNGGCTSNSLCINTMGSFRCGGCKPGYVGDQIKG). In terms of domain architecture, EGF-like 4 spans 418 to 459 (PEKSCRHGQNPCHASAQCSEEKDGDVTCTCSVGWAGNGYLCG). TSP type-3 repeat units lie at residues 460-492 (KDTD…NSGQ), 493-528 (EDTD…NIDQ), 529-551 (KNSD…NNDQ), 552-587 (RDTD…NVDQ), 588-610 (KDKD…NPNQ), 611-648 (SDID…NSNQ), 649-688 (LDTD…NPGQ), and 689-724 (EDDN…EITL). A glycan (N-linked (GlcNAc...) asparagine) is linked at Asn-609. The segment at 610-678 (QSDIDNDLVG…IPDTVPPGPD (69 aa)) is disordered. Polar residues predominate over residues 637-649 (TDNCPTVINSNQL). Acidic residues predominate over residues 657–668 (GDECDDDDDNDG). The TSP C-terminal domain maps to 728 to 942 (RAYQTVVLDP…LKYRCNDTIP (215 aa)). Asn-938 is a glycosylation site (N-linked (GlcNAc...) asparagine).

Belongs to the thrombospondin family. As to quaternary structure, homotrimer; disulfide-linked.

It localises to the endoplasmic reticulum. It is found in the sarcoplasmic reticulum. Its subcellular location is the secreted. The protein resides in the extracellular space. The protein localises to the extracellular matrix. Functionally, adhesive glycoprotein that mediates cell-to-cell and cell-to-matrix interactions and may be involved in various processes including cellular proliferation, migration, adhesion and attachment. May play a role in ER stress response. May participate in the genesis and function of cardiac and skeletal muscle. This is Thrombospondin-4 (thbs4) from Xenopus laevis (African clawed frog).